Reading from the N-terminus, the 1254-residue chain is SUN domain-containing ossification factor (1254 aa).

A signal peptide spans Met1–Cys29. Disordered stretches follow at residues Lys58–Lys88, Glu118–Thr270, and Glu282–Gln304. Positions Val130–Ser145 are enriched in low complexity. Positions Glu165–Glu175 are enriched in acidic residues. N-linked (GlcNAc...) asparagine glycosylation is found at Asn202 and Asn236. The segment covering Leu241 to Asp253 has biased composition (basic and acidic residues). Positions Glu284–Met453 constitute an SUN domain. Residues Ser288–Ser297 are compositionally biased toward polar residues. Asn524 carries N-linked (GlcNAc...) asparagine glycosylation. 3 disordered regions span residues Asn530 to Glu553, Glu583 to Ser605, and His759 to Glu788. Positions Pro540–Glu553 are enriched in low complexity. Residues Asn909 to Asp1009 adopt a coiled-coil conformation. N-linked (GlcNAc...) asparagine glycosylation is found at Asn928 and Asn955. Residues Gln1011–Gln1031 traverse the membrane as a helical segment. A Phosphoserine modification is found at Ser1081. Positions Glu1152–Gln1172 are disordered. Over residues Ser1163–Gln1172 the composition is skewed to low complexity.

In terms of processing, O-glycosylated. O-mannosylated by POMT1 and POMT2 and elongated by POMGNT1. Post-translationally, N-glycosylated. As to expression, highly expressed in pancreas and testis and to a lower extent in prostate, ovary, heart, thymus, small intestine and spleen.

The protein localises to the rough endoplasmic reticulum membrane. Its function is as follows. Required for bone modeling during late embryogenesis. Regulates type I collagen synthesis in osteoblasts during their postnatal maturation. This is SUN domain-containing ossification factor (SUCO) from Homo sapiens (Human).